We begin with the raw amino-acid sequence, 327 residues long: Cyclic AMP-responsive element-binding protein 1 (327 aa).

Disordered stretches follow at residues 1–27 and 94–113; these read MTME…QMTV and SEDS…RREI. In terms of domain architecture, KID spans 87 to 146; sequence QISTIAESEDSQESVDSVTDSQKRREILSRRPSYRKILNDLSSDAPGVPRIEEEKSEEET. Ser119 is subject to Phosphoserine; by CaMK1, CaMK2, CaMK4, PKB/AKT1 or PKB/AKT2, RPS6KA3, RPS6KA4, RPS6KA5 and SGK1. Residue Lys122 forms a Glycyl lysine isopeptide (Lys-Gly) (interchain with G-Cter in SUMO2) linkage. The interval 126–151 is disordered; sequence DLSSDAPGVPRIEEEKSEEETSAPAI. Position 128 is a phosphoserine; by CaMK2 (Ser128). Residue Ser257 is modified to Phosphoserine; by HIPK2. Positions 269-327 constitute a bZIP domain; that stretch reads ARKREVRLMKNREAARECRRKKKEYVKCLENRVAVLENQNKTLIEELKALKDLYCHKSD. The tract at residues 270–295 is basic motif; sequence RKREVRLMKNREAARECRRKKKEYVK. Residues Lys271 and Lys290 each participate in a glycyl lysine isopeptide (Lys-Gly) (interchain with G-Cter in SUMO1) cross-link. The tract at residues 297–318 is leucine-zipper; it reads LENRVAVLENQNKTLIEELKAL.

This sequence belongs to the bZIP family. As to quaternary structure, interacts with PPRC1. Binds DNA as a dimer. This dimer is stabilized by magnesium ions. Interacts, through the bZIP domain, with the coactivators CRTC1/TORC1, CRTC2/TORC2 and CRTC3/TORC3. Interacts (phosphorylated form) with TOX3. When phosphorylated on Ser-119, binds CREBBP. Interacts with ARRB1. Binds to HIPK2. Interacts with SGK1. Interacts with CREBL2; regulates CREB1 phosphorylation, stability and transcriptional activity. Interacts with TSSK4; this interaction facilitates phosphorylation on Ser-119. Forms a complex with KMT2A and CREBBP. Interacts with TOX4; CREB1 is required for full induction of TOX4-dependent activity and the interaction is increased by cAMP and inhibited by insulin. Phosphorylation of Ser-119 allows CREBBP binding. Stimulated by phosphorylation. Phosphorylated Ser-128 can be detected in the suprachiasmatic nucleus (SCN), the amygdala, the cortex, and the hippocampus but not in the striatum nor in the cerebellum. In the SCN, phosphorylation of Ser-128 and Ser-119 are stimulated by light exposure and submitted to circadian oscillations. In the retina, only phosphorylation of Ser-119 can be detected upon light exposure. Phosphorylation of both Ser-119 and Ser-128 in the SCN regulates the activity of CREB and participates in circadian rhythm generation. Phosphorylated upon calcium influx by CaMK4 and CaMK2 on Ser-119. CaMK4 is much more potent than CAMK2 in activating CREB. Phosphorylated by CaMK2 on Ser-128. Phosphorylation of Ser-128 blocks CREB-mediated transcription even when Ser-119 is phosphorylated. Phosphorylated by CaMK1. Phosphorylation of Ser-271 by HIPK2 in response to genotoxic stress promotes CREB1 activity, facilitating the recruitment of the coactivator CBP. Phosphorylated at Ser-119 by RPS6KA3, RPS6KA4 and RPS6KA5 in response to mitogenic or stress stimuli. CREBL2 positively regulates phosphorylation at Ser-119 thereby stimulating CREB1 transcriptional activity. In liver, phosphorylation is induced by fasting or glucagon in a circadian fashion. Phosphorylated by TSSK4 on Ser-119. In terms of processing, sumoylated with SUMO1. Sumoylation on Lys-290, but not on Lys-271, is required for nuclear localization of this protein. Sumoylation is enhanced under hypoxia, promoting nuclear localization and stabilization. Expressed in the heart (at protein level).

It localises to the nucleus. Its function is as follows. Phosphorylation-dependent transcription factor that stimulates transcription upon binding to the DNA cAMP response element (CRE), a sequence present in many viral and cellular promoters. Transcription activation is enhanced by the TORC coactivators which act independently of Ser-119 phosphorylation. Involved in different cellular processes including the synchronization of circadian rhythmicity and the differentiation of adipose cells. Regulates the expression of apoptotic and inflammatory response factors in cardiomyocytes in response to ERFE-mediated activation of AKT signaling. This Mus musculus (Mouse) protein is Cyclic AMP-responsive element-binding protein 1 (Creb1).